The chain runs to 162 residues: Calcium vector protein (162 aa).

Ala-2 is subject to N-acetylalanine. EF-hand domains are found at residues 12–47, 49–84, 86–121, and 123–158; these read EEKD…LGQT, TKRE…KWVR, DDEE…VGEE, and LTDA…SKNA. N6,N6,N6-trimethyllysine is present on Lys-96. Residues Asp-99, Asn-101, Asp-103, and Glu-110 each coordinate Ca(2+). Lys-117 bears the N6,N6,N6-trimethyllysine mark. Ca(2+) contacts are provided by Asp-136, Asp-138, Asn-140, and Glu-147.

The protein resides in the cytoplasm. The exact function of this protein is not yet known. It interacts with CAVPT, a protein also of unknown function, in a calcium-dependent way. This protein binds two calcium ions. This is Calcium vector protein from Branchiostoma lanceolatum (Common lancelet).